The following is a 411-amino-acid chain: Phosphoribosylaminoimidazole-succinocarboxamide synthase, chloroplastic (411 aa).

The transit peptide at 1-53 (MAQCVRSTLNPVRTPQSFTRKAYVKSPAFASVSFLRAVPEFNKYPKPCSLVMS) directs the protein to the chloroplast.

Belongs to the SAICAR synthetase family.

It localises to the plastid. The protein localises to the chloroplast. It carries out the reaction 5-amino-1-(5-phospho-D-ribosyl)imidazole-4-carboxylate + L-aspartate + ATP = (2S)-2-[5-amino-1-(5-phospho-beta-D-ribosyl)imidazole-4-carboxamido]succinate + ADP + phosphate + 2 H(+). Its pathway is purine metabolism; IMP biosynthesis via de novo pathway; 5-amino-1-(5-phospho-D-ribosyl)imidazole-4-carboxamide from 5-amino-1-(5-phospho-D-ribosyl)imidazole-4-carboxylate: step 1/2. The sequence is that of Phosphoribosylaminoimidazole-succinocarboxamide synthase, chloroplastic (PUR7) from Arabidopsis thaliana (Mouse-ear cress).